The following is a 546-amino-acid chain: NADH-ubiquinone oxidoreductase chain 5 (546 aa).

Transmembrane regions (helical) follow at residues 1 to 21 (MFLL…SPIA), 31 to 51 (IIAI…YYEV), 52 to 72 (VFMG…VGTF), 82 to 102 (LLTA…HMYA), 112 to 132 (LNLF…LVAA), 135 to 155 (LLVM…LIGY), 175 to 195 (VSDG…GSLE), 198 to 218 (LLNV…GAMG), 237 to 257 (TPVS…YLLV), 264 to 284 (EMFV…FGAT), 291 to 310 (VIAY…LGLG), 321 to 341 (LMTH…VISG), 358 to 378 (AMFT…WPEL), 387 to 407 (ILNL…TLLL), 440 to 460 (VLPI…VWVG), and 468 to 488 (LFFL…AGIL).

The protein belongs to the complex I subunit 5 family.

The protein localises to the mitochondrion inner membrane. It catalyses the reaction a ubiquinone + NADH + 5 H(+)(in) = a ubiquinol + NAD(+) + 4 H(+)(out). Its function is as follows. Core subunit of the mitochondrial membrane respiratory chain NADH dehydrogenase (Complex I) that is believed to belong to the minimal assembly required for catalysis. Complex I functions in the transfer of electrons from NADH to the respiratory chain. The immediate electron acceptor for the enzyme is believed to be ubiquinone. This is NADH-ubiquinone oxidoreductase chain 5 (ND5) from Chlamydomonas reinhardtii (Chlamydomonas smithii).